The sequence spans 849 residues: MHKHQHCCKCPECYEVTRLAALRRLEPPGYGDWQVPDPYGPSGGNGASSGYGGYSSQTLPSQAGATPTPRTKAKLIPTGRDVGPVPPKPVPGKSTPKLNGSGPGWWPECTCTNRDWYEQASPAPLLVNPEALEPSLSVNGSDGMFKYEEIVLERGNSGLGFSIAGGIDNPHVPDDPGIFITKIIPGGAAAMDGRLGVNDCVLRVNEVDVSEVVHSRAVEALKEAGPVVRLVVRRRQPPPETIMEVNLLKGPKGLGFSIAGGIGNQHIPGDNSIYITKIIEGGAAQKDGRLQIGDRLLAVNNTNLQDVRHEEAVASLKNTSDMVYLKVAKPGSIHLNDMYAPPDYASTFTALADNHISHNSSLGYLGAVESKVTYPAPPQVPPTRYSPIPRHMLAEEDFTREPRKIILHKGSTGLGFNIVGGEDGEGIFVSFILAGGPADLSGELRRGDRILSVNGVNLRNATHEQAAAALKRAGQSVTIVAQYRPEEYSRFESKIHDLREQMMNSSMSSGSGSLRTSEKRSLYVRALFDYDRTRDSCLPSQGLSFSYGDILHVINASDDEWWQARLVTPHGESEQIGVIPSKKRVEKKERARLKTVKFHARTGMIESNRDFPGLSDDYYGAKNLKGVTSNTSDSESSSKGQEDAILSYEPVTRQEIHYARPVIILGPMKDRVNDDLISEFPHKFGSCVPHTTRPRRDNEVDGQDYHFVVSREQMEKDIQDNKFIEAGQFNDNLYGTSIQSVRAVAERGKHCILDVSGNAIKRLQQAQLYPIAIFIKPKSIEALMEMNRRQTYEQANKIFDKAMKLEQEFGEYFTAIVQGDSLEEIYNKIKQIIEDQSGHYIWVPSPEKL.

A disordered region spans residues 32 to 101; sequence DWQVPDPYGP…GKSTPKLNGS (70 aa). Gly residues predominate over residues 41-53; the sequence is PSGGNGASSGYGG. A compositionally biased stretch (polar residues) spans 57–69; that stretch reads QTLPSQAGATPTP. PDZ domains are found at residues 149-235, 244-330, and 404-484; these read EIVL…VRRR, EVNL…VAKP, and KIIL…AQYR. S157 is modified (phosphoserine). The SH3 domain occupies 519 to 589; that stretch reads KRSLYVRALF…PSKKRVEKKE (71 aa). The 176-residue stretch at 659-834 folds into the Guanylate kinase-like domain; the sequence is ARPVIILGPM…IYNKIKQIIE (176 aa). Residue Y705 is modified to Phosphotyrosine.

The protein belongs to the MAGUK family. As to quaternary structure, interacts through its PDZ domains with NETO1, GRIN2B, SYNGAP1 and APC. Interacts through its first two PDZ domains with ERBB4. Interacts through its third PDZ domain with NLGN1, and probably with NLGN2 and NLGN3. Interacts through its guanylate kinase-like domain with DLGAP1, DLGAP2, DLGAP3 and DLGAP4. Interacts with FRMPD4 (via C-terminus). Interacts with LRFN1, LRFN2 and LRFN4. Interacts with FLTP. Interacts with GPR85. Interacts with DGKI (via PDZ-binding motif).

Required for learning most likely through its role in synaptic plasticity following NMDA receptor signaling. In Mus musculus (Mouse), this protein is Disks large homolog 3 (Dlg3).